Consider the following 244-residue polypeptide: 5-oxoprolinase subunit A (244 aa).

This sequence belongs to the LamB/PxpA family. Forms a complex composed of PxpA, PxpB and PxpC.

The enzyme catalyses 5-oxo-L-proline + ATP + 2 H2O = L-glutamate + ADP + phosphate + H(+). In terms of biological role, catalyzes the cleavage of 5-oxoproline to form L-glutamate coupled to the hydrolysis of ATP to ADP and inorganic phosphate. The sequence is that of 5-oxoprolinase subunit A from Shigella sonnei (strain Ss046).